Consider the following 322-residue polypeptide: Pantothenate kinase (322 aa).

101–108 (GSVAVGKS) lines the ATP pocket.

This sequence belongs to the prokaryotic pantothenate kinase family.

The protein resides in the cytoplasm. The enzyme catalyses (R)-pantothenate + ATP = (R)-4'-phosphopantothenate + ADP + H(+). Its pathway is cofactor biosynthesis; coenzyme A biosynthesis; CoA from (R)-pantothenate: step 1/5. In Psychromonas ingrahamii (strain DSM 17664 / CCUG 51855 / 37), this protein is Pantothenate kinase.